A 122-amino-acid chain; its full sequence is Cytochrome c-556 (122 aa).

Positions 11, 111, 114, and 115 each coordinate heme. Residues methionine 11, cysteine 111, cysteine 114, and histidine 115 each contribute to the heme c site.

As to quaternary structure, monomer. Post-translationally, binds 1 heme c group covalently per subunit.

Low-spin monoheme cytochrome c. The protein is Cytochrome c-556 of Agrobacterium tumefaciens (strain B2A).